The following is a 74-amino-acid chain: Small ribosomal subunit protein bS18 (74 aa).

This sequence belongs to the bacterial ribosomal protein bS18 family. As to quaternary structure, part of the 30S ribosomal subunit. Forms a tight heterodimer with protein bS6.

Binds as a heterodimer with protein bS6 to the central domain of the 16S rRNA, where it helps stabilize the platform of the 30S subunit. The sequence is that of Small ribosomal subunit protein bS18 from Rhizorhabdus wittichii (strain DSM 6014 / CCUG 31198 / JCM 15750 / NBRC 105917 / EY 4224 / RW1) (Sphingomonas wittichii).